The following is a 468-amino-acid chain: Protein translocase subunit SecY (468 aa).

Residues 1 to 20 (MGARDVIYAMEKWFPEVERP) lie on the Cytoplasmic side of the membrane. The helical transmembrane segment at 21 to 47 (KKHVPLKEKFVWTGLALVLYYVLAEIP) threads the bilayer. Over 48–58 (VYGIPKKIQDY) the chain is Extracellular. The helical intramembrane region spans 59-66 (FQFLRVVL). The discontinuously helical transmembrane segment at 59–87 (FQFLRVVLAGRNGSILTLGIGPIVTAGII) threads the bilayer. The stretch at 67–78 (AGRNGSILTLGI) is an intramembrane region. The helical intramembrane region spans 79 to 87 (GPIVTAGII). Residues 88 to 108 (LQLLVGSELIRLDLANPEDRR) lie on the Cytoplasmic side of the membrane. Residues 109 to 133 (FYQALQRVFSVFMCFFEAAIWVLGG) form a helical membrane-spanning segment. The Extracellular segment spans residues 134–144 (AFGRVGVDVTY). The chain crosses the membrane as a helical span at residues 145–169 (TIATLMIIQLALGGIILIVLDELVS). Topologically, residues 170–175 (KWGIGS) are cytoplasmic. A helical transmembrane segment spans residues 176–194 (GISLFIAAGVSQRILTRSL). The Extracellular segment spans residues 195-239 (NPLTDPNIIDPLTGKPAIVGAIPYFIQHILDGDLKGALYRGGSAP). Residues 240–261 (DMIAVTATIIVFLVVVYFESMR) traverse the membrane as a helical segment. Residues 262 to 285 (VEIPLGYRGVTIRGRYPIKFLYVS) are Cytoplasmic-facing. Residues 286–307 (NIPIILTFALYANIQLWARVLD) traverse the membrane as a helical segment. Residues 308 to 346 (RFGHPWLGRFDPVTGNPIGGFVLYVIPPRNIFTVIDNPV) are Extracellular-facing. Residues 347–366 (RAIIYLILTIIFSLLFGFLW) traverse the membrane as a helical segment. The Cytoplasmic portion of the chain corresponds to 367–409 (VELTGLDARTIARQLQRAGLQIPGFRRDPRTLERVLQKYIPYV). A helical transmembrane segment spans residues 410–428 (TFWGSLTVALISVLADFLG). Topologically, residues 429–431 (ALG) are extracellular. A helical transmembrane segment spans residues 432-446 (TGTGILLTVGILYRF). At 447–468 (YEEIAREQITEMFPALRRLFKG) the chain is on the cytoplasmic side.

The protein belongs to the SecY/SEC61-alpha family. As to quaternary structure, component of the Sec protein translocase complex. Heterotrimer consisting of alpha (SecY), beta (SecG) and gamma (SecE) subunits. The heterotrimers can form oligomers, although 1 heterotrimer is thought to be able to translocate proteins. Interacts with the ribosome. May interact with SecDF, and other proteins may be involved.

The protein localises to the cell membrane. Functionally, the central subunit of the protein translocation channel SecYEG. Consists of two halves formed by TMs 1-5 and 6-10. These two domains form a lateral gate at the front which open onto the bilayer between TMs 2 and 7, and are clamped together by SecE at the back. The channel is closed by both a pore ring composed of hydrophobic SecY resides and a short helix (helix 2A) on the extracellular side of the membrane which forms a plug. The plug probably moves laterally to allow the channel to open. The ring and the pore may move independently. The polypeptide is Protein translocase subunit SecY (Pyrococcus horikoshii (strain ATCC 700860 / DSM 12428 / JCM 9974 / NBRC 100139 / OT-3)).